A 367-amino-acid polypeptide reads, in one-letter code: Outer membrane protein P2 (367 aa).

A signal peptide spans 1–20; the sequence is MKKTLAALIVGAFAASAANA.

It belongs to the Gram-negative porin family. As to quaternary structure, homotrimer.

The protein localises to the cell outer membrane. In terms of biological role, forms pores that allow passive diffusion of small molecules across the outer membrane. The polypeptide is Outer membrane protein P2 (ompP2) (Haemophilus influenzae).